Here is an 86-residue protein sequence, read N- to C-terminus: Small ribosomal subunit protein bS20 (86 aa).

The span at methionine 1–methionine 27 shows a compositional bias: basic residues. A disordered region spans residues methionine 1 to methionine 28.

It belongs to the bacterial ribosomal protein bS20 family.

Functionally, binds directly to 16S ribosomal RNA. The polypeptide is Small ribosomal subunit protein bS20 (Vibrio parahaemolyticus serotype O3:K6 (strain RIMD 2210633)).